The following is a 233-amino-acid chain: Cysteine-rich venom protein LIO1 (233 aa).

An N-terminal signal peptide occupies residues 1–18; the sequence is MIVFILLSFAAVLQQSFG. An SCP domain is found at 37-165; sequence VDTHNSYRRS…PYNYFYVCQY (129 aa). 7 cysteine pairs are disulfide-bonded: C74–C152, C91–C166, C147–C163, C185–C192, C188–C197, C210–C228, and C219–C232. Residues 201-233 form the ShKT domain; the sequence is CTSENVFTNCNDMVKESGCQDERMKSICPASCF.

This sequence belongs to the CRISP family. In terms of tissue distribution, expressed by the venom gland.

Its subcellular location is the secreted. Functionally, blocks contraction of smooth muscle elicited by high potassium-induced depolarization, but does not block caffeine-stimulated contraction. May target voltage-gated calcium channels on smooth muscle. This is Cysteine-rich venom protein LIO1 from Erythrolamprus poecilogyrus (Water snake).